We begin with the raw amino-acid sequence, 254 residues long: HTH-type transcriptional repressor DasR (254 aa).

Positions 17–87 constitute an HTH gntR-type domain; sequence RTARVPKYYR…QGKGTFVAKP (71 aa). The H-T-H motif DNA-binding region spans 47 to 66; that stretch reads ERTLAAEFDTSRTTVRQALQ.

The protein localises to the cytoplasm. Its activity is regulated as follows. Binding to the target genes is abolished by GlcN6P, a central molecule in N-acetylglucosamine metabolism. In terms of biological role, global regulator that is part of the nutrient-sensing system. In the absence of glucosamine 6-P (GlcN6P), represses the phosphotransferase system (PTS) specific for the uptake of N-acetylglucosamine (PTSNag), and genes involved in the metabolism of chitin, as well as several genes involved in development, thereby linking carbon availability to morphogenesis. Also regulates the expression of the ABC transporters DasABC and NgcEFG, which are involved in N,N'-diacetylchitobiose ((GlcNAc)2) uptake. Binds to the DNA consensus sequence 5'-ACTGGTCTAGACCACT-3'. This chain is HTH-type transcriptional repressor DasR (dasR), found in Streptomyces coelicolor (strain ATCC BAA-471 / A3(2) / M145).